The following is a 300-amino-acid chain: 5'-adenylylsulfate reductase-like 5 (300 aa).

The first 23 residues, 1–23 (MDSRVSILFVCAIAVSCFTSGSA), serve as a signal peptide directing secretion. Positions 41 to 161 (FDLEAKCPPS…LIEFYEEATG (121 aa)) constitute a Thioredoxin domain. An N-linked (GlcNAc...) asparagine glycan is attached at Asn136. Residues 202-222 (FLVLSLLFICLQMAILVFPIA) form a helical membrane-spanning segment.

It is found in the membrane. The chain is 5'-adenylylsulfate reductase-like 5 (APRL5) from Arabidopsis thaliana (Mouse-ear cress).